The following is a 339-amino-acid chain: GTP 3',8-cyclase (339 aa).

In terms of domain architecture, Radical SAM core spans Asn-20–Asp-241. Arg-29 contributes to the GTP binding site. Positions 36 and 40 each coordinate [4Fe-4S] cluster. Tyr-42 is an S-adenosyl-L-methionine binding site. Residue Cys-43 coordinates [4Fe-4S] cluster. GTP is bound at residue Arg-78. Residue Gly-82 participates in S-adenosyl-L-methionine binding. A GTP-binding site is contributed by Thr-109. An S-adenosyl-L-methionine-binding site is contributed by Ser-133. Position 170 (Lys-170) interacts with GTP. Residue Met-204 participates in S-adenosyl-L-methionine binding. Residues Cys-267 and Cys-270 each contribute to the [4Fe-4S] cluster site. Arg-272–Arg-274 lines the GTP pocket. Residue Cys-284 coordinates [4Fe-4S] cluster.

It belongs to the radical SAM superfamily. MoaA family. As to quaternary structure, monomer and homodimer. [4Fe-4S] cluster serves as cofactor.

It carries out the reaction GTP + AH2 + S-adenosyl-L-methionine = (8S)-3',8-cyclo-7,8-dihydroguanosine 5'-triphosphate + 5'-deoxyadenosine + L-methionine + A + H(+). It functions in the pathway cofactor biosynthesis; molybdopterin biosynthesis. Its function is as follows. Catalyzes the cyclization of GTP to (8S)-3',8-cyclo-7,8-dihydroguanosine 5'-triphosphate. The chain is GTP 3',8-cyclase from Psychromonas ingrahamii (strain DSM 17664 / CCUG 51855 / 37).